We begin with the raw amino-acid sequence, 2149 residues long: Polyketide synthase 1 (2149 aa).

Positions 19 to 261 (FIFGDQSSCN…TRLAVHAPYH (243 aa)) are N-terminal acylcarrier protein transacylase domain (SAT). A Ketosynthase family 3 (KS3) domain is found at 394-829 (ESKIAIIGMS…GGNTALLVED (436 aa)). Catalysis depends on for beta-ketoacyl synthase activity residues Cys566, His701, and His745. The segment at 929–1233 (AFVFSGQGSQ…PSLMRNKDGW (305 aa)) is malonyl-CoA:ACP transacylase (MAT) domain. The For acyl/malonyl transferase activity role is filled by Ser1018. Residues 1310–1624 (TASVHRIVHE…RKVLNTAMPP (315 aa)) are product template (PT) domain. The segment at 1314–1447 (HRIVHESVDK…SSLHFERPKV (134 aa)) is N-terminal hotdog fold. Positions 1314-1619 (HRIVHESVDK…FQGIPRKVLN (306 aa)) constitute a PKS/mFAS DH domain. His1346 (proton acceptor; for dehydratase activity) is an active-site residue. The C-terminal hotdog fold stretch occupies residues 1474–1619 (LNSRMSSGVI…FQGIPRKVLN (146 aa)). Catalysis depends on Asp1533, which acts as the Proton donor; for dehydratase activity. Residues 1619–1657 (NTAMPPPKSQNEAPVRSAPAKPAAKPPKSASSEHSGHFA) form a disordered region. A compositionally biased stretch (low complexity) spans 1635–1650 (SAPAKPAAKPPKSASS). The Carrier 1 domain occupies 1678-1752 (RNPMLAVFKI…DLATHLGLDT (75 aa)). Residue Ser1712 is modified to O-(pantetheine 4'-phosphoryl)serine. The span at 1755 to 1790 (SDQSSGQSSSSGGLSPRSDSIGEITSSATTPPSLSP) shows a compositional bias: low complexity. Positions 1755–1796 (SDQSSGQSSSSGGLSPRSDSIGEITSSATTPPSLSPRGSVSG) are disordered. Residues 1793-1870 (SVSGSQCKDV…SFKHMFQQGH (78 aa)) form the Carrier 2 domain. Ser1830 carries the post-translational modification O-(pantetheine 4'-phosphoryl)serine. The thioesterase (TE) domain stretch occupies residues 1882–2147 (LKQYRATSTL…ERVAAFIRST (266 aa)). The active-site For thioesterase activity is Ser1973.

Functionally, polyketide synthase; part of the Pks1 gene cluster that mediates the biosynthesis of an anthraquinone derivative pigment that contributes to conidial pigmentation that provides protection from UV radiation, heat and cold stress. The polyketide synthase Pks1 produces 1-acetyl-2,4,6,8-tetrahydroxy-9,10-anthraquinone though condensation of acetyl-CoA with malonyl-CoA. The dehydratase EthD and the laccase Mlac1 further convert the anthraquinone derivative into the final conidial pigment. The protein is Polyketide synthase 1 of Metarhizium majus (strain ARSEF 297).